A 488-amino-acid polypeptide reads, in one-letter code: Serine/threonine-protein kinase haspin homolog hrk1 (488 aa).

The Protein kinase domain occupies 156–488 (TFEIQKIGEA…SLLNWVRQKY (333 aa)). ATP is bound by residues 162–170 (IGEASYSEV) and Lys-184. Asp-305 acts as the Proton acceptor in catalysis.

The protein belongs to the protein kinase superfamily. Ser/Thr protein kinase family. Haspin subfamily. As to quaternary structure, interacts with pds5 and swi6.

The protein localises to the cytoplasm. It localises to the chromosome. The catalysed reaction is L-seryl-[protein] + ATP = O-phospho-L-seryl-[protein] + ADP + H(+). It carries out the reaction L-threonyl-[protein] + ATP = O-phospho-L-threonyl-[protein] + ADP + H(+). In terms of biological role, serine/threonine haspin-like protein kinase involved in cell cycle regulation. Acts in chromosomal passenger complex (CPC) targeting to centromeres by phosphorylating histone H3 at 'Thr3' (H3T3ph). The sequence is that of Serine/threonine-protein kinase haspin homolog hrk1 (hrk1) from Schizosaccharomyces pombe (strain 972 / ATCC 24843) (Fission yeast).